Reading from the N-terminus, the 125-residue chain is Small ribosomal subunit protein uS12 (125 aa).

The interval Met-1 to Arg-31 is disordered. Polar residues predominate over residues Ser-19–Gln-29. Residue Asp-89 is modified to 3-methylthioaspartic acid.

It belongs to the universal ribosomal protein uS12 family. In terms of assembly, part of the 30S ribosomal subunit. Contacts proteins S8 and S17. May interact with IF1 in the 30S initiation complex.

With S4 and S5 plays an important role in translational accuracy. Its function is as follows. Interacts with and stabilizes bases of the 16S rRNA that are involved in tRNA selection in the A site and with the mRNA backbone. Located at the interface of the 30S and 50S subunits, it traverses the body of the 30S subunit contacting proteins on the other side and probably holding the rRNA structure together. The combined cluster of proteins S8, S12 and S17 appears to hold together the shoulder and platform of the 30S subunit. The chain is Small ribosomal subunit protein uS12 from Paracidovorax citrulli (strain AAC00-1) (Acidovorax citrulli).